Here is a 261-residue protein sequence, read N- to C-terminus: MRFLILFLALSLGGIDAAPPVHSRIVGGFKCEKNSQPWHVAVYRYNEYICGGVLLDANWVLTAAHCYYEENKVSLGKNNLYEEEPSAQHRLVSKSFLHPGYNRSLHRNHIRHPEYDYSNDLMLLRLSKPADITDVVKPIALPTEEPKLGSTCLASGWGSTTPFKFQNAKDLQCVNLKLLPNEDCGKAHIEKVTDVMLCAGETDGGKDTCKGDSGGPLICDGVLQGITSWGFTPCGEPKKPGVYTKLIKFTSWIKDTMAKNL.

An N-terminal signal peptide occupies residues 1 to 18; the sequence is MRFLILFLALSLGGIDAA. Residues 19-24 constitute a propeptide, activation peptide; it reads PPVHSR. The Peptidase S1 domain maps to 25–258; that stretch reads IVGGFKCEKN…FTSWIKDTMA (234 aa). 5 disulfide bridges follow: Cys-31/Cys-173, Cys-50/Cys-66, Cys-152/Cys-219, Cys-184/Cys-198, and Cys-209/Cys-234. His-65 (charge relay system) is an active-site residue. Residue Asn-102 is glycosylated (N-linked (GlcNAc...) asparagine). Catalysis depends on Asp-120, which acts as the Charge relay system. Ser-213 serves as the catalytic Charge relay system.

Belongs to the peptidase S1 family. Kallikrein subfamily.

The enzyme catalyses Preferential cleavage of Arg-|-Xaa bonds in small molecule substrates. Highly selective action to release kallidin (lysyl-bradykinin) from kininogen involves hydrolysis of Met-|-Xaa or Leu-|-Xaa.. Functionally, glandular kallikreins cleave Met-Lys and Arg-Ser bonds in kininogen to release Lys-bradykinin. This chain is Kallikrein 1-related peptidase b9 (Klk1b9), found in Mus musculus (Mouse).